The chain runs to 203 residues: E3 ubiquitin-protein ligase RNF152 (203 aa).

The RING-type zinc-finger motif lies at 12–55 (CQICFNYYSPRRRPKLLDCKHTCCSVCLQQMRTSQKDVRCPWCR). The necessary for interaction with RRAGA stretch occupies residues 106 to 165 (ISKERTLLPGDMGCRLLPGSQQKSLTVVTIPAEQQPLQGGAPQEAVEEEPDRRGVAKSST). Residues 140–159 (QPLQGGAPQEAVEEEPDRRG) are disordered. Residues 167 to 187 (SGVCTVILVACVLVFLLGIVL) form a helical membrane-spanning segment.

It belongs to the RNF152 family. In terms of assembly, interacts with RRAGA (inactive GDP-bound form); stimulated by amino acid starvation. Interacts with SEC16A. Ubiquitinated. Autoubiquitinated in vitro, leading to its degradation by the proteasome.

The protein resides in the lysosome membrane. The catalysed reaction is S-ubiquitinyl-[E2 ubiquitin-conjugating enzyme]-L-cysteine + [acceptor protein]-L-lysine = [E2 ubiquitin-conjugating enzyme]-L-cysteine + N(6)-ubiquitinyl-[acceptor protein]-L-lysine.. It participates in protein modification; protein ubiquitination. Its function is as follows. E3 ubiquitin-protein ligase that acts as a negative regulator of mTORC1 signaling by mediating ubiquitination of RagA/RRAGA and RHEB. Catalyzes 'Lys-63'-linked polyubiquitination of RagA/RRAGA in response to amino acid starvation, thereby regulating mTORC1 signaling. Also mediates monoubiquitination of RHEB, promoting its association with the TSC-TBC complex and subsequent inhibition. Also mediates 'Lys-48'-linked polyubiquitination of target proteins and their subsequent targeting to the proteasome for degradation. Induces apoptosis when overexpressed. The polypeptide is E3 ubiquitin-protein ligase RNF152 (Rattus norvegicus (Rat)).